Consider the following 235-residue polypeptide: ATP-dependent dethiobiotin synthetase BioD (235 aa).

12–17 (GVGKTF) provides a ligand contact to ATP. Position 16 (T16) interacts with Mg(2+). Residue K37 is part of the active site. S41 provides a ligand contact to substrate. ATP contacts are provided by residues D51, 112–115 (EGAG), and 202–204 (PKL). Mg(2+)-binding residues include D51 and E112.

It belongs to the dethiobiotin synthetase family. As to quaternary structure, homodimer. Mg(2+) serves as cofactor.

The protein localises to the cytoplasm. It catalyses the reaction (7R,8S)-7,8-diammoniononanoate + CO2 + ATP = (4R,5S)-dethiobiotin + ADP + phosphate + 3 H(+). The protein operates within cofactor biosynthesis; biotin biosynthesis; biotin from 7,8-diaminononanoate: step 1/2. Its function is as follows. Catalyzes a mechanistically unusual reaction, the ATP-dependent insertion of CO2 between the N7 and N8 nitrogen atoms of 7,8-diaminopelargonic acid (DAPA, also called 7,8-diammoniononanoate) to form a ureido ring. The sequence is that of ATP-dependent dethiobiotin synthetase BioD from Bacillus licheniformis (strain ATCC 14580 / DSM 13 / JCM 2505 / CCUG 7422 / NBRC 12200 / NCIMB 9375 / NCTC 10341 / NRRL NRS-1264 / Gibson 46).